Reading from the N-terminus, the 278-residue chain is Potassium/proton antiporter CemA (278 aa).

A run of 4 helical transmembrane segments spans residues 61–81, 155–175, 203–223, and 238–258; these read ILLLFISPVLVNQASKFFVFG, AVKNILSDLVSILVFILLMIT, IILFTDMFVGFHSPHGWEVII, and FIFLFISTFPVILDTIFKYWI.

It belongs to the CemA family.

The protein resides in the plastid. Its subcellular location is the chloroplast inner membrane. It catalyses the reaction K(+)(in) + H(+)(out) = K(+)(out) + H(+)(in). Functionally, contributes to K(+)/H(+) antiport activity by supporting proton efflux to control proton extrusion and homeostasis in chloroplasts in a light-dependent manner to modulate photosynthesis. Prevents excessive induction of non-photochemical quenching (NPQ) under continuous-light conditions. Indirectly promotes efficient inorganic carbon uptake into chloroplasts. This is Potassium/proton antiporter CemA from Pyropia yezoensis (Susabi-nori).